The chain runs to 92 residues: Small ribosomal subunit protein bS20 (92 aa).

The tract at residues M1–R25 is disordered.

It belongs to the bacterial ribosomal protein bS20 family.

In terms of biological role, binds directly to 16S ribosomal RNA. The polypeptide is Small ribosomal subunit protein bS20 (Paraburkholderia phytofirmans (strain DSM 17436 / LMG 22146 / PsJN) (Burkholderia phytofirmans)).